The chain runs to 200 residues: LexA repressor (200 aa).

The segment at residues 28–48 (RAEIAEILGFKSANAAEEHLK) is a DNA-binding region (H-T-H motif). Residues Ser-118 and Lys-155 each act as for autocatalytic cleavage activity in the active site.

This sequence belongs to the peptidase S24 family. Homodimer.

The enzyme catalyses Hydrolysis of Ala-|-Gly bond in repressor LexA.. Its function is as follows. Represses a number of genes involved in the response to DNA damage (SOS response), including recA and lexA. In the presence of single-stranded DNA, RecA interacts with LexA causing an autocatalytic cleavage which disrupts the DNA-binding part of LexA, leading to derepression of the SOS regulon and eventually DNA repair. The protein is LexA repressor of Teredinibacter turnerae (strain ATCC 39867 / T7901).